The sequence spans 363 residues: Glutamate 5-kinase (363 aa).

Lys-3 provides a ligand contact to ATP. Substrate-binding residues include Ser-43, Asp-128, and Asn-140. Residues 160 to 161 (TD) and 202 to 208 (TGGMRTK) each bind ATP. The region spanning 267–349 (AGAILIDDGA…REIENVLGYS (83 aa)) is the PUA domain.

This sequence belongs to the glutamate 5-kinase family.

The protein localises to the cytoplasm. The catalysed reaction is L-glutamate + ATP = L-glutamyl 5-phosphate + ADP. The protein operates within amino-acid biosynthesis; L-proline biosynthesis; L-glutamate 5-semialdehyde from L-glutamate: step 1/2. Its function is as follows. Catalyzes the transfer of a phosphate group to glutamate to form L-glutamate 5-phosphate. This chain is Glutamate 5-kinase, found in Xanthomonas axonopodis pv. citri (strain 306).